A 393-amino-acid chain; its full sequence is Probable acetyl-CoA acyltransferase (393 aa).

C88 serves as the catalytic Acyl-thioester intermediate. Residues H349 and C378 each act as proton acceptor in the active site.

Belongs to the thiolase-like superfamily. Thiolase family.

The protein localises to the cytoplasm. It carries out the reaction 2 acetyl-CoA = acetoacetyl-CoA + CoA. The protein is Probable acetyl-CoA acyltransferase of Staphylococcus aureus (strain MRSA252).